We begin with the raw amino-acid sequence, 158 residues long: Transcription factor BTF3 homolog 4 (158 aa).

Positions 33–98 (TADDKKLQSS…AETKQLTEML (66 aa)) constitute an NAC-A/B domain. Positions 125–158 (LDNKAPKAEDIDEEDDDVPDLVENFDEASKNEAN) are disordered. Positions 134 to 150 (DIDEEDDDVPDLVENFD) are enriched in acidic residues.

The protein belongs to the NAC-beta family.

This Danio rerio (Zebrafish) protein is Transcription factor BTF3 homolog 4 (btf3l4).